A 485-amino-acid chain; its full sequence is E-selectin (485 aa).

An N-terminal signal peptide occupies residues 1–22 (MIVSQYLSALTFVLLLFKESRT). The 118-residue stretch at 23 to 140 (WSYHASTEMM…CTKQKLALCY (118 aa)) folds into the C-type lectin domain. Over 23–430 (WSYHASTEMM…CEAPTVSQTP (408 aa)) the chain is Extracellular. Disulfide bonds link Cys-41–Cys-139, Cys-112–Cys-131, Cys-144–Cys-155, Cys-149–Cys-164, Cys-166–Cys-175, Cys-181–Cys-224, Cys-194–Cys-206, Cys-210–Cys-237, Cys-242–Cys-286, Cys-255–Cys-268, Cys-272–Cys-299, Cys-304–Cys-349, Cys-335–Cys-362, Cys-367–Cys-408, and Cys-394–Cys-421. N-linked (GlcNAc...) asparagine glycosylation is found at Asn-61, Asn-79, and Asn-88. Ca(2+) is bound by residues Glu-102, Asn-104, and Glu-110. A carbohydrate is bound by residues 102 to 110 (EPNNKQSDE), 114 to 119 (EIYIKR), and 127 to 129 (NDE). Ca(2+)-binding residues include Asn-127 and Asp-128. The EGF-like domain maps to 141 to 176 (KAACNPTPCGSHGECVETINNYTCQCHPGFKGLKCE). A glycan (N-linked (GlcNAc...) asparagine) is linked at Asn-161. 4 consecutive Sushi domains span residues 179-239 (VTCP…KCNV), 240-301 (VKCD…TCKA), 302-364 (VSCA…VCEV), and 365-423 (VRCS…TCEA). N-linked (GlcNAc...) asparagine glycosylation is present at Asn-203. Asn-265 carries an N-linked (GlcNAc...) asparagine glycan. 2 N-linked (GlcNAc...) asparagine glycosylation sites follow: Asn-312 and Asn-316. Asn-379 and Asn-401 each carry an N-linked (GlcNAc...) asparagine glycan. A helical membrane pass occupies residues 431 to 453 (LAVGLSTAGVSLVTIPSFLFWLL). Over 454 to 485 (KRLQKKAKKFSPASSCSSLKSNGCYSTPSKLI) the chain is Cytoplasmic. Positions 466–485 (ASSCSSLKSNGCYSTPSKLI) are disordered.

This sequence belongs to the selectin/LECAM family. Interacts with SELPLG/PSGL1 and PODXL2 through the sialyl Lewis X epitope. SELPLG sulfation appears not to be required for this interaction.

It is found in the cell membrane. In terms of biological role, cell-surface glycoprotein having a role in immunoadhesion. Mediates in the adhesion of blood neutrophils in cytokine-activated endothelium through interaction with SELPLG/PSGL1. May have a role in capillary morphogenesis. This Bos taurus (Bovine) protein is E-selectin (SELE).